The following is a 419-amino-acid chain: eIF5-mimic protein 1 (419 aa).

Residues 1–22 are disordered; sequence MNKHQKPVLTGQRFKTRKRDEK. Lys-117 is modified (N6-acetyllysine). The W2 domain maps to 248 to 415; that stretch reads VQQSLGTRKE…QNAEEESESE (168 aa). A phosphoserine mark is found at Ser-412, Ser-414, and Ser-419.

Belongs to the BZW family. Interacts with EIF3E, EIF2S2 and EIF3C.

It localises to the cytoplasm. Translation initiation regulator which represses non-AUG initiated translation and repeat-associated non-AUG (RAN) initiated translation by acting as a competitive inhibitor of eukaryotic translation initiation factor 5 (EIF5) function. Increases the accuracy of translation initiation by impeding EIF5-dependent translation from non-AUG codons by competing with it for interaction with EIF2S2 within the 43S pre-initiation complex (PIC) in an EIF3C-binding dependent manner. The polypeptide is eIF5-mimic protein 1 (Bzw2) (Mus musculus (Mouse)).